Here is a 412-residue protein sequence, read N- to C-terminus: Non-specific lipid-transfer protein-like 2 (412 aa).

Residues 410–412 (SKI) carry the Microbody targeting signal motif.

It belongs to the thiolase-like superfamily. Thiolase family. As to expression, expressed in intestine, hypodermis and body-wall muscle.

It localises to the peroxisome. It carries out the reaction choloyl-CoA + propanoyl-CoA = 3alpha,7alpha,12alpha-trihydroxy-24-oxo-5beta-cholestan-26-oyl-CoA + CoA. Its activity is regulated as follows. Inhibited by acetyl-CoA. Its function is as follows. Catalyzes the thiolytic cleavage of 3-ketoacyl-CoA with 8-16 carbon residues in the acyl group using a ping-pong mechanism whereby binding to 3-ketooctanoyl-CoA results in the release of acetyl-CoA and the subsequent addition of CoA produces 3-ketohexanohyl-CoA. Involved in the biosynthesis of the dauer pheromone by providing short chains of fatty acid that are attached to the ascarylose sugars of the pheromone. The chain is Non-specific lipid-transfer protein-like 2 from Caenorhabditis elegans.